The following is a 326-amino-acid chain: MASEVEEQIPVREEFFLCGGVETKIIKCGPWTNLFEKQDVSKPKQLIFIIPGNPGYSAFYVPFAKALYTLMKSRFPVWIISHAGFSVTPKDKKVLAAPQEESNAQKIEDVYGLNGQIEHKIAFLRAHVPKDVKLILIGHSVGTYMTLHVMKRVLELPVAHAFLLFPTIERMSESPNGKFATPFLCQFRYLLYATSYLLFKPCPEVIKSFIIQKLMGQMNIKLELPLTDILQPFCLANAAYLGSQEMVQIVKRDDDIIKEFLPKLKFYYGKTDGWCPVKYYEDMKKDFPEGNIYLCEKGIPHAFVLDFSQEMATIVAEWINNRPPRK.

The Nucleophile role is filled by Ser140. Residues Asp272 and His301 each act as charge relay system in the active site.

Belongs to the AB hydrolase superfamily. LDAH family. Expressed in liver, adrenal gland, prostate, spleen, kidney, brown and white adipose tissue, testis and to a lesser extent in brain (at protein level). Expressed in peritoneal macrophages and bone marrow-derived macrophages (at protein level). Highly expressed in macrophage and foam cell-rich areas in atherosclerotic lesions (at protein level). mRNA, but no protein, expressed in heart and muscle.

The protein localises to the lipid droplet. The protein resides in the endoplasmic reticulum. The enzyme catalyses a cholesterol ester + H2O = cholesterol + a fatty acid + H(+). In terms of biological role, probable serine lipid hydrolase associated with lipid droplets. Has low cholesterol esterase activity. Appears to lack triglyceride lipase activity. Involved in cholesterol and triglyceride homeostasis; stimulates cellular triglyceride accumulation and cellular cholesterol release. Acts antagonistically with PNPLA2/ATGL in regulation of cellular lipid stores. May regulate triglyceride accumulation indirectly through stimulation of PNPLA2/ATGL ubiquitination and proteasomal degradation. Promotes microtubule-dependent lipid droplet fusion. Highly expressed in macrophage-rich areas in atherosclerotic lesions, suggesting that it could promote cholesterol ester turnover in macrophages. Its function is as follows. Stimulates cellular triglyceride accumulation and lipid droplet fusion. Associates with lipid droplets but does not stimulate cellular triglyceride accumulation, lipid droplet fusion or ATGL proteasomal degradation. This Mus musculus (Mouse) protein is Lipid droplet-associated hydrolase.